Here is an 892-residue protein sequence, read N- to C-terminus: Translation initiation factor IF-2 (892 aa).

The interval 65–296 is disordered; the sequence is KTRSTLNIPS…KGKRKPSTLQ (232 aa). A compositionally biased stretch (polar residues) spans 68-82; it reads STLNIPSTGGKSKSV. A compositionally biased stretch (basic and acidic residues) spans 99–217; the sequence is EQAKAEEQAQ…KMAAENEGKW (119 aa). Positions 224-237 are enriched in polar residues; that stretch reads QTESADYHVTTSQH. The span at 239-254 shows a compositional bias: basic and acidic residues; it reads RAAEDENDAKVEGDRR. Basic residues predominate over residues 255 to 269; it reads SRTRGGKATKQKKGN. Residues 270-283 are compositionally biased toward basic and acidic residues; that stretch reads KLSESKADREEARA. A tr-type G domain is found at 391–560; it reads HRAPVVTIMG…LLQAEVLELK (170 aa). Residues 400–407 form a G1 region; it reads GHVDHGKT. Position 400–407 (400–407) interacts with GTP; that stretch reads GHVDHGKT. The tract at residues 425–429 is G2; that stretch reads GITQH. Positions 446–449 are G3; it reads DTPG. Residues 446–450 and 500–503 each bind GTP; these read DTPGH and NKID. Residues 500–503 form a G4 region; the sequence is NKID. Positions 536 to 538 are G5; sequence SAK.

The protein belongs to the TRAFAC class translation factor GTPase superfamily. Classic translation factor GTPase family. IF-2 subfamily.

Its subcellular location is the cytoplasm. Its function is as follows. One of the essential components for the initiation of protein synthesis. Protects formylmethionyl-tRNA from spontaneous hydrolysis and promotes its binding to the 30S ribosomal subunits. Also involved in the hydrolysis of GTP during the formation of the 70S ribosomal complex. In Yersinia pseudotuberculosis serotype O:1b (strain IP 31758), this protein is Translation initiation factor IF-2.